The sequence spans 482 residues: O-phosphoseryl-tRNA(Sec) selenium transferase (482 aa).

Positions 1-36 (MKSSFGKKEGEYSRLVSKSSNKLLNSLWEKKQIPEE) are tetramerization. Residue Arg-69 participates in pyridoxal 5'-phosphate binding. Positions 90–100 (GRSGNLLEIQP) are phosphate loop (P-loop). Substrate is bound by residues Arg-91, Ser-92, and Gln-99. Lys-277 is subject to N6-(pyridoxal phosphate)lysine. Residue Arg-306 participates in substrate binding. A tRNA-binding site is contributed by Arg-388. Positions 461–482 (DRRGGSSGRRVPMNESFDMEND) are disordered.

Belongs to the SepSecS family. Homotetramer formed by a catalytic dimer and a non-catalytic dimer serving as a binding platform that orients tRNASec for catalysis. Each tetramer binds the CCA ends of two tRNAs which point to the active sites of the catalytic dimer. The cofactor is pyridoxal 5'-phosphate.

It is found in the cytoplasm. The enzyme catalyses O-phospho-L-seryl-tRNA(Sec) + selenophosphate + H2O = L-selenocysteinyl-tRNA(Sec) + 2 phosphate. Its pathway is aminoacyl-tRNA biosynthesis; selenocysteinyl-tRNA(Sec) biosynthesis; selenocysteinyl-tRNA(Sec) from L-seryl-tRNA(Sec) (archaeal/eukaryal route): step 2/2. Functionally, converts O-phosphoseryl-tRNA(Sec) to selenocysteinyl-tRNA(Sec) required for selenoprotein biosynthesis. The polypeptide is O-phosphoseryl-tRNA(Sec) selenium transferase (secs-1) (Caenorhabditis briggsae).